The chain runs to 194 residues: Putative adenylate kinase (194 aa).

ATP is bound by residues Gly16, Gly18, Lys19, Thr20, and Thr21. The NMP stretch occupies residues 36-59; sequence SVGELLAGTPYVTYIPELDTYEIV. The tract at residues 108–118 is LID; sequence RRGWPLKKILD. Arg109 serves as a coordination point for ATP.

This sequence belongs to the adenylate kinase family. AK6 subfamily. As to quaternary structure, interacts with uS11. Not a structural component of 40S pre-ribosomes, but transiently interacts with them by binding to uS11.

The enzyme catalyses AMP + ATP = 2 ADP. The catalysed reaction is ATP + H2O = ADP + phosphate + H(+). Broad-specificity nucleoside monophosphate (NMP) kinase that catalyzes the reversible transfer of the terminal phosphate group between nucleoside triphosphates and monophosphates. Also has ATPase activity. Involved in the late maturation steps of the 30S ribosomal particles, specifically 16S rRNA maturation. While NMP activity is not required for ribosome maturation, ATPase activity is. Associates transiently with small ribosomal subunit protein uS11. ATP hydrolysis breaks the interaction with uS11. May temporarily remove uS11 from the ribosome to enable a conformational change of the ribosomal RNA that is needed for the final maturation step of the small ribosomal subunit. This chain is Putative adenylate kinase, found in Pyrobaculum aerophilum (strain ATCC 51768 / DSM 7523 / JCM 9630 / CIP 104966 / NBRC 100827 / IM2).